A 395-amino-acid chain; its full sequence is Zinc-regulated GTPase metalloprotein activator 1B (395 aa).

The disordered stretch occupies residues 1–36 (MLPAVGSADEEEDPAEEDCPELVPMETTQSEEEEKS). Acidic residues predominate over residues 8 to 20 (ADEEEDPAEEDCP). Residues 17 to 24 (EDCPELVP) carry the psi-PxLVp motif motif. 49 to 56 (GYLGAGKT) lines the GTP pocket. Zn(2+)-binding residues include Cys-107, Cys-109, and Cys-110. The short motif at 107–110 (CLCC) is the CXCC motif element. GTP is bound by residues 110–114 (CSVKD) and 203–206 (NKTD). The region spanning 274–377 (IVTITFEVPG…ILKQLFIATV (104 aa)) is the CobW C-terminal domain.

This sequence belongs to the SIMIBI class G3E GTPase family. ZNG1 subfamily.

The protein localises to the nucleus. The enzyme catalyses GTP + H2O = GDP + phosphate + H(+). Its function is as follows. Zinc chaperone that directly transfers zinc cofactor to target metalloproteins, thereby activating them. Catalyzes zinc insertion into the active site of methionine aminopeptidase METAP1, which function to cleave the initiator methionine from polypeptides during or after protein translation. Mechanistically, the N-terminal psi-PxLVp motif binds to the C6H2-type zinc finger of inactive form of METAP1. After formation of the docked complex, zinc is transferred from the CXCC motif in the GTPase domain of ZNG1B to the zinc binding site in the peptidase domain of METAP1 in a process requiring GTP hydrolysis. GTP/GDP exchange is required for release of active METAP1. The polypeptide is Zinc-regulated GTPase metalloprotein activator 1B (Homo sapiens (Human)).